Here is a 341-residue protein sequence, read N- to C-terminus: UDP-3-O-(3-hydroxymyristoyl)glucosamine N-acyltransferase (341 aa).

His239 functions as the Proton acceptor in the catalytic mechanism.

Belongs to the transferase hexapeptide repeat family. LpxD subfamily. Homotrimer.

The enzyme catalyses a UDP-3-O-[(3R)-3-hydroxyacyl]-alpha-D-glucosamine + a (3R)-hydroxyacyl-[ACP] = a UDP-2-N,3-O-bis[(3R)-3-hydroxyacyl]-alpha-D-glucosamine + holo-[ACP] + H(+). It catalyses the reaction UDP-3-O-[(3R)-3-hydroxytetradecanoyl]-alpha-D-glucosamine + (3R)-hydroxytetradecanoyl-[ACP] = UDP-2-N,3-O-bis[(3R)-3-hydroxytetradecanoyl]-alpha-D-glucosamine + holo-[ACP] + H(+). The protein operates within glycolipid biosynthesis; lipid IV(A) biosynthesis; lipid IV(A) from (3R)-3-hydroxytetradecanoyl-[acyl-carrier-protein] and UDP-N-acetyl-alpha-D-glucosamine: step 3/6. Its function is as follows. Catalyzes the N-acylation of UDP-3-O-(hydroxytetradecanoyl)glucosamine using 3-hydroxytetradecanoyl-ACP as the acyl donor. Is involved in the biosynthesis of lipid A, a phosphorylated glycolipid that anchors the lipopolysaccharide to the outer membrane of the cell. The polypeptide is UDP-3-O-(3-hydroxymyristoyl)glucosamine N-acyltransferase (Salmonella choleraesuis (strain SC-B67)).